The primary structure comprises 191 residues: dCTP deaminase (191 aa).

DCTP contacts are provided by residues 112-117 (KSTYAR), 136-138 (TLE), glutamine 157, tyrosine 173, and glutamine 183. Glutamate 138 acts as the Proton donor/acceptor in catalysis.

Belongs to the dCTP deaminase family. Homotrimer.

It catalyses the reaction dCTP + H2O + H(+) = dUTP + NH4(+). It functions in the pathway pyrimidine metabolism; dUMP biosynthesis; dUMP from dCTP (dUTP route): step 1/2. Functionally, catalyzes the deamination of dCTP to dUTP. The chain is dCTP deaminase from Xylella fastidiosa (strain 9a5c).